The chain runs to 432 residues: uncharacterized protein (432 aa).

The next 13 helical transmembrane spans lie at 7 to 27 (FIGLGIITASLIFGSSLPDIY), 29 to 49 (GIVILIVAGCLWFFELLPLPV), 68 to 88 (EALTYFAHPIIFLFLGGFMLA), 124 to 144 (FLSMWISNTSATLILLPIALG), 156 to 176 (FLLLGVAYSASIGGIATIIGS), 196 to 216 (VGFPISLLLFLICTLTLYIYF), 241 to 261 (LVIFVLIASLWIISDYLSEIF), 266 to 286 (FDSVIAIFAIILLFVFNLVEV), 291 to 311 (KIDWGTLILFGGALCLGGVIV), 326 to 346 (ILGNLTPIVLLFLVVTITIIL), 358 to 378 (IIVPILFGVSLGIPKEILILA), 379 to 399 (VGMSASCSFILPVGTPPNAIV), and 412 to 432 (IGMILSILSAAVITLYSILYL).

Belongs to the CitM (TC 2.A.11) transporter family.

It is found in the cell membrane. This is an uncharacterized protein from Methanocaldococcus jannaschii (strain ATCC 43067 / DSM 2661 / JAL-1 / JCM 10045 / NBRC 100440) (Methanococcus jannaschii).